Here is a 142-residue protein sequence, read N- to C-terminus: Large ribosomal subunit protein uL13 (142 aa).

The protein belongs to the universal ribosomal protein uL13 family. As to quaternary structure, part of the 50S ribosomal subunit.

Its function is as follows. This protein is one of the early assembly proteins of the 50S ribosomal subunit, although it is not seen to bind rRNA by itself. It is important during the early stages of 50S assembly. The protein is Large ribosomal subunit protein uL13 of Halorhodospira halophila (strain DSM 244 / SL1) (Ectothiorhodospira halophila (strain DSM 244 / SL1)).